We begin with the raw amino-acid sequence, 383 residues long: Histidine decarboxylase (383 aa).

His120 serves as a coordination point for substrate. Residue Lys233 is modified to N6-(pyridoxal phosphate)lysine.

Belongs to the group II decarboxylase family. In terms of assembly, homotetramer. Requires pyridoxal 5'-phosphate as cofactor.

It carries out the reaction L-histidine + H(+) = histamine + CO2. The polypeptide is Histidine decarboxylase (Acinetobacter baumannii (strain ATCC 17978 / DSM 105126 / CIP 53.77 / LMG 1025 / NCDC KC755 / 5377)).